Reading from the N-terminus, the 354-residue chain is 3-dehydroquinate synthase (354 aa).

NAD(+)-binding positions include 66–71, 100–104, 124–125, Lys-137, and Lys-146; these read DGERYK, GVVGD, and TT. Zn(2+)-binding residues include Glu-179, His-242, and His-259.

It belongs to the sugar phosphate cyclases superfamily. Dehydroquinate synthase family. The cofactor is Co(2+). Requires Zn(2+) as cofactor. NAD(+) serves as cofactor.

It is found in the cytoplasm. The catalysed reaction is 7-phospho-2-dehydro-3-deoxy-D-arabino-heptonate = 3-dehydroquinate + phosphate. Its pathway is metabolic intermediate biosynthesis; chorismate biosynthesis; chorismate from D-erythrose 4-phosphate and phosphoenolpyruvate: step 2/7. Functionally, catalyzes the conversion of 3-deoxy-D-arabino-heptulosonate 7-phosphate (DAHP) to dehydroquinate (DHQ). The sequence is that of 3-dehydroquinate synthase from Halorhodospira halophila (strain DSM 244 / SL1) (Ectothiorhodospira halophila (strain DSM 244 / SL1)).